We begin with the raw amino-acid sequence, 66 residues long: DNA gyrase inhibitor YacG (66 aa).

Zn(2+)-binding residues include cysteine 9, cysteine 12, cysteine 28, and cysteine 32. The interval histidine 45 to histidine 66 is disordered.

This sequence belongs to the DNA gyrase inhibitor YacG family. Interacts with GyrB. The cofactor is Zn(2+).

Functionally, inhibits all the catalytic activities of DNA gyrase by preventing its interaction with DNA. Acts by binding directly to the C-terminal domain of GyrB, which probably disrupts DNA binding by the gyrase. The sequence is that of DNA gyrase inhibitor YacG from Pseudomonas entomophila (strain L48).